Here is a 286-residue protein sequence, read N- to C-terminus: tRNA (guanine-N(7)-)-methyltransferase (286 aa).

Positions 1-22 are disordered; that stretch reads MGRARPKSQKRGDYRVSRSQEN. S-adenosyl-L-methionine is bound by residues Gly-104, 127 to 128, 162 to 163, and Cys-182; these read EI and NS. Asp-185 is an active-site residue. 260-262 contributes to the S-adenosyl-L-methionine binding site; sequence TEE.

Belongs to the class I-like SAM-binding methyltransferase superfamily. TrmB family. Forms a complex with TRM82.

It is found in the nucleus. It catalyses the reaction guanosine(46) in tRNA + S-adenosyl-L-methionine = N(7)-methylguanosine(46) in tRNA + S-adenosyl-L-homocysteine. It functions in the pathway tRNA modification; N(7)-methylguanine-tRNA biosynthesis. Catalyzes the formation of N(7)-methylguanine at position 46 (m7G46) in tRNA. The protein is tRNA (guanine-N(7)-)-methyltransferase of Colletotrichum orbiculare (strain 104-T / ATCC 96160 / CBS 514.97 / LARS 414 / MAFF 240422) (Cucumber anthracnose fungus).